Here is a 332-residue protein sequence, read N- to C-terminus: 5-dehydro-2-deoxygluconokinase (332 aa).

It belongs to the carbohydrate kinase PfkB family.

The enzyme catalyses 5-dehydro-2-deoxy-D-gluconate + ATP = 6-phospho-5-dehydro-2-deoxy-D-gluconate + ADP + H(+). Its pathway is polyol metabolism; myo-inositol degradation into acetyl-CoA; acetyl-CoA from myo-inositol: step 5/7. Its function is as follows. Catalyzes the phosphorylation of 5-dehydro-2-deoxy-D-gluconate (2-deoxy-5-keto-D-gluconate or DKG) to 6-phospho-5-dehydro-2-deoxy-D-gluconate (DKGP). The sequence is that of 5-dehydro-2-deoxygluconokinase from Bacillus anthracis (strain A0248).